Here is a 118-residue protein sequence, read N- to C-terminus: Na(+)/H(+) antiporter subunit G1 (118 aa).

Helical transmembrane passes span isoleucine 4–alanine 24, alanine 38–leucine 58, and phenylalanine 60–isoleucine 80.

This sequence belongs to the CPA3 antiporters (TC 2.A.63) subunit G family. As to quaternary structure, may form a heterooligomeric complex that consists of seven subunits: mnhA1, mnhB1, mnhC1, mnhD1, mnhE1, mnhF1 and mnhG1.

It localises to the cell membrane. Its function is as follows. Mnh complex is a Na(+)/H(+) antiporter involved in Na(+) excretion. The protein is Na(+)/H(+) antiporter subunit G1 (mnhG1) of Staphylococcus aureus (strain Mu3 / ATCC 700698).